We begin with the raw amino-acid sequence, 723 residues long: Enolase-phosphatase E1 (723 aa).

Residues 126–127 and K160 contribute to the substrate site; that span reads SS. The interval 239 to 723 is disordered; the sequence is GAGAKRKIDE…TPTPPIEAES (485 aa). Basic and acidic residues-rich tracts occupy residues 262 to 284 and 293 to 308; these read VKKDENGDAAAKKDETAKVDEPA and AAKEEAAAPAEGKMEV. A compositionally biased stretch (low complexity) spans 311-320; that stretch reads AAAAAAPPAD. 6 stretches are compositionally biased toward basic and acidic residues: residues 322 to 406, 419 to 443, 468 to 479, 487 to 496, 511 to 565, and 577 to 593; these read AEEK…VVEE, AEEKEAEKKEEDKAAEPAAEKKPAE, EPAKEKPAEAEA, TKAEVVEKPA, SADK…KGEE, and VEAKEDAAKPEEKKSDA. 2 stretches are compositionally biased toward low complexity: residues 596–606 and 636–647; these read VSTTTTTTSTE and NGEAEPAAEAVV. Residues 653 to 666 are compositionally biased toward basic and acidic residues; it reads GKHEEKGDSDKEND.

This sequence belongs to the HAD-like hydrolase superfamily. MasA/MtnC family. As to quaternary structure, monomer.

It localises to the cytoplasm. Its subcellular location is the nucleus. The catalysed reaction is 5-methylsulfanyl-2,3-dioxopentyl phosphate + H2O = 1,2-dihydroxy-5-(methylsulfanyl)pent-1-en-3-one + phosphate. Its pathway is amino-acid biosynthesis; L-methionine biosynthesis via salvage pathway; L-methionine from S-methyl-5-thio-alpha-D-ribose 1-phosphate: step 3/6. It participates in amino-acid biosynthesis; L-methionine biosynthesis via salvage pathway; L-methionine from S-methyl-5-thio-alpha-D-ribose 1-phosphate: step 4/6. In terms of biological role, bifunctional enzyme that catalyzes the enolization of 2,3-diketo-5-methylthiopentyl-1-phosphate (DK-MTP-1-P) into the intermediate 2-hydroxy-3-keto-5-methylthiopentenyl-1-phosphate (HK-MTPenyl-1-P), which is then dephosphorylated to form the acireductone 1,2-dihydroxy-3-keto-5-methylthiopentene (DHK-MTPene). The chain is Enolase-phosphatase E1 from Culex quinquefasciatus (Southern house mosquito).